Here is a 97-residue protein sequence, read N- to C-terminus: Aspartyl/glutamyl-tRNA(Asn/Gln) amidotransferase subunit C (97 aa).

It belongs to the GatC family. As to quaternary structure, heterotrimer of A, B and C subunits.

It catalyses the reaction L-glutamyl-tRNA(Gln) + L-glutamine + ATP + H2O = L-glutaminyl-tRNA(Gln) + L-glutamate + ADP + phosphate + H(+). The catalysed reaction is L-aspartyl-tRNA(Asn) + L-glutamine + ATP + H2O = L-asparaginyl-tRNA(Asn) + L-glutamate + ADP + phosphate + 2 H(+). Allows the formation of correctly charged Asn-tRNA(Asn) or Gln-tRNA(Gln) through the transamidation of misacylated Asp-tRNA(Asn) or Glu-tRNA(Gln) in organisms which lack either or both of asparaginyl-tRNA or glutaminyl-tRNA synthetases. The reaction takes place in the presence of glutamine and ATP through an activated phospho-Asp-tRNA(Asn) or phospho-Glu-tRNA(Gln). The chain is Aspartyl/glutamyl-tRNA(Asn/Gln) amidotransferase subunit C from Roseiflexus sp. (strain RS-1).